The primary structure comprises 865 residues: Xylosyltransferase 2 (865 aa).

The Cytoplasmic portion of the chain corresponds to 1-15; sequence MVASARVQKLVRRYK. The helical; Signal-anchor for type II membrane protein transmembrane segment at 16–36 threads the bilayer; sequence LAIATALAILLLQGLVVWSFS. Topologically, residues 37–865 are lumenal; that stretch reads GLEEDEPGEK…GPVKADGRLR (829 aa). Residues 39–155 are disordered; the sequence is EEDEPGEKGR…SVEGAPQPTD (117 aa). Positions 53 to 65 are enriched in basic and acidic residues; sequence RPLDPGEGSKDTD. Over residues 73–82 the composition is skewed to basic residues; it reads SAGRRHGRWR. Asn-122 carries an N-linked (GlcNAc...) asparagine glycan. Intrachain disulfides connect Cys-162–Cys-190, Cys-206–Cys-448, Cys-467–Cys-480, and Cys-469–Cys-478. UDP-alpha-D-xylose contacts are provided by residues Val-239, Asp-267, and 296–298; that span reads TIW. An N-linked (GlcNAc...) asparagine glycan is attached at Asn-327. 400 to 401 is a UDP-alpha-D-xylose binding site; that stretch reads DW. UDP-alpha-D-xylose-binding positions include Ser-481 and 504–505; that span reads RK. Intrachain disulfides connect Cys-581–Cys-833 and Cys-826–Cys-839. Asn-683 carries an N-linked (GlcNAc...) asparagine glycan.

The protein belongs to the glycosyltransferase 14 family. XylT subfamily. In terms of assembly, monomer. Mg(2+) serves as cofactor. Mn(2+) is required as a cofactor. Post-translationally, contains disulfide bonds. Detected in brain, liver, lung, kidney, heart, spleen and testis, and at lower levels in skeletal muscle.

It is found in the golgi apparatus membrane. Its subcellular location is the secreted. The enzyme catalyses UDP-alpha-D-xylose + L-seryl-[protein] = 3-O-(beta-D-xylosyl)-L-seryl-[protein] + UDP + H(+). It participates in glycan metabolism; chondroitin sulfate biosynthesis. It functions in the pathway glycan metabolism; heparan sulfate biosynthesis. Functionally, catalyzes the first step in the biosynthesis of chondroitin sulfate, heparan sulfate and dermatan sulfate proteoglycans, such as DCN. Transfers D-xylose from UDP-D-xylose to specific serine residues of the core protein. In Mus musculus (Mouse), this protein is Xylosyltransferase 2 (Xylt2).